Here is a 220-residue protein sequence, read N- to C-terminus: Large ribosomal subunit protein uL3 (220 aa).

A disordered region spans residues phenylalanine 127 to glycine 155.

This sequence belongs to the universal ribosomal protein uL3 family. In terms of assembly, part of the 50S ribosomal subunit. Forms a cluster with proteins L14 and L19.

Functionally, one of the primary rRNA binding proteins, it binds directly near the 3'-end of the 23S rRNA, where it nucleates assembly of the 50S subunit. The polypeptide is Large ribosomal subunit protein uL3 (Staphylococcus aureus (strain JH9)).